A 91-amino-acid polypeptide reads, in one-letter code: Defensin-like protein 269 (91 aa).

The N-terminal stretch at 1-25 (MAVSKTTMLIVLVAIILSCVSISNA) is a signal peptide. Intrachain disulfides connect C41–C82, C53–C72, C59–C77, and C63–C79.

This sequence belongs to the DEFL family.

The protein localises to the secreted. The chain is Defensin-like protein 269 from Arabidopsis thaliana (Mouse-ear cress).